We begin with the raw amino-acid sequence, 319 residues long: Phosphoenolpyruvate transferase (319 aa).

Aspartate 50 contacts 7,8-didemethyl-8-hydroxy-5-deazariboflavin.

This sequence belongs to the CofD family. Homodimer. Mg(2+) serves as cofactor.

The catalysed reaction is enolpyruvoyl-2-diphospho-5'-guanosine + 7,8-didemethyl-8-hydroxy-5-deazariboflavin = dehydro coenzyme F420-0 + GMP + H(+). The protein operates within cofactor biosynthesis; coenzyme F420 biosynthesis. Catalyzes the transfer of the phosphoenolpyruvate moiety from enoylpyruvoyl-2-diphospho-5'-guanosine (EPPG) to 7,8-didemethyl-8-hydroxy-5-deazariboflavin (FO) with the formation of dehydro coenzyme F420-0 and GMP. This Streptomyces avermitilis (strain ATCC 31267 / DSM 46492 / JCM 5070 / NBRC 14893 / NCIMB 12804 / NRRL 8165 / MA-4680) protein is Phosphoenolpyruvate transferase.